The sequence spans 1115 residues: DNA-directed RNA polymerase subunit beta (1115 aa).

The disordered stretch occupies residues 1084–1115; sequence HEAGEGEDDEYFEEDEEAVDDEPMTFDDDDME. A compositionally biased stretch (acidic residues) spans 1088–1115; it reads EGEDDEYFEEDEEAVDDEPMTFDDDDME.

The protein belongs to the RNA polymerase beta chain family. In terms of assembly, the RNAP catalytic core consists of 2 alpha, 1 beta, 1 beta' and 1 omega subunit. When a sigma factor is associated with the core the holoenzyme is formed, which can initiate transcription.

It carries out the reaction RNA(n) + a ribonucleoside 5'-triphosphate = RNA(n+1) + diphosphate. In terms of biological role, DNA-dependent RNA polymerase catalyzes the transcription of DNA into RNA using the four ribonucleoside triphosphates as substrates. The protein is DNA-directed RNA polymerase subunit beta of Desulfitobacterium hafniense (strain DSM 10664 / DCB-2).